Consider the following 597-residue polypeptide: DNA ligase (597 aa).

Residue glutamate 262 participates in ATP binding. Lysine 264 acts as the N6-AMP-lysine intermediate in catalysis. 6 residues coordinate ATP: arginine 269, arginine 284, glutamate 314, phenylalanine 354, arginine 431, and lysine 437.

It belongs to the ATP-dependent DNA ligase family. It depends on Mg(2+) as a cofactor. Mn(2+) serves as cofactor.

The catalysed reaction is ATP + (deoxyribonucleotide)n-3'-hydroxyl + 5'-phospho-(deoxyribonucleotide)m = (deoxyribonucleotide)n+m + AMP + diphosphate.. It carries out the reaction ADP + (deoxyribonucleotide)n-3'-hydroxyl + 5'-phospho-(deoxyribonucleotide)m = (deoxyribonucleotide)n+m + AMP + phosphate.. It catalyses the reaction GTP + (deoxyribonucleotide)n-3'-hydroxyl + 5'-phospho-(deoxyribonucleotide)m = (deoxyribonucleotide)n+m + GMP + diphosphate.. With respect to regulation, inhibited by Ca(2+) and Zn(2+). In terms of biological role, DNA ligase that seals nicks in double-stranded DNA during DNA replication, DNA recombination and DNA repair. Can use both ATP and ADP. The protein is DNA ligase of Staphylothermus marinus (strain ATCC 43588 / DSM 3639 / JCM 9404 / F1).